The primary structure comprises 505 residues: Methylmalonyl-CoA carboxyltransferase 5S subunit (505 aa).

Residues 14-276 (VGITELVLRD…TTNLDYDRLH (263 aa)) enclose the Pyruvate carboxyltransferase domain. Residues 22-26 (RDAHQ), alanine 59, and lysine 184 contribute to the substrate site. Position 23 (aspartate 23) interacts with Co(2+). 3 residues coordinate Co(2+): lysine 184, histidine 215, and histidine 217. N6-carboxylysine; partial is present on lysine 184.

As to quaternary structure, homodimer. Transcarboxylase is composed of three subunits: 1.3S, 5S, and 12S. The core of the enzyme is composed of six 12S subunits. On each side of the core there are three pairs of 5S subunits. Each 5S dimer is attached to the core by two 1.3S subunits. Thus the total number of chains is 30 (6 + 12 + 12). Co(2+) serves as cofactor. Post-translationally, lys-184 is carboxylated in the free enzyme and helps to coordinate the cobalt ion. Lys-184 is partially carboxylated in the complex with pyruvate, but is not carboxylated in the oxaloacetate-bound form.

The enzyme catalyses (S)-methylmalonyl-CoA + pyruvate = propanoyl-CoA + oxaloacetate. The 5S subunit specifically catalyzes the transfer of the carboxyl group from biotin of the 1.3S subunit to pyruvate to form oxaloacetate and 1.3S biotin. The polypeptide is Methylmalonyl-CoA carboxyltransferase 5S subunit (Propionibacterium freudenreichii subsp. shermanii).